The primary structure comprises 131 residues: Large ribosomal subunit protein eL14 (131 aa).

Belongs to the eukaryotic ribosomal protein eL14 family. In terms of assembly, component of the large ribosomal subunit. Mature ribosomes consist of a small (40S) and a large (60S) subunit. The 40S subunit contains about 32 different proteins and 1 molecule of RNA (18S). The 60S subunit contains 45 different proteins and 3 molecules of RNA (25S, 5.8S and 5S).

It is found in the cytoplasm. Functionally, component of the ribosome, a large ribonucleoprotein complex responsible for the synthesis of proteins in the cell. The small ribosomal subunit (SSU) binds messenger RNAs (mRNAs) and translates the encoded message by selecting cognate aminoacyl-transfer RNA (tRNA) molecules. The large subunit (LSU) contains the ribosomal catalytic site termed the peptidyl transferase center (PTC), which catalyzes the formation of peptide bonds, thereby polymerizing the amino acids delivered by tRNAs into a polypeptide chain. The nascent polypeptides leave the ribosome through a tunnel in the LSU and interact with protein factors that function in enzymatic processing, targeting, and the membrane insertion of nascent chains at the exit of the ribosomal tunnel. The polypeptide is Large ribosomal subunit protein eL14 (Candida albicans (strain SC5314 / ATCC MYA-2876) (Yeast)).